The chain runs to 168 residues: Shikimate kinase (168 aa).

Residue 10-15 (CSGKST) coordinates ATP. Mg(2+) is bound at residue serine 14. Positions 32, 56, and 78 each coordinate substrate. An ATP-binding site is contributed by arginine 116. Arginine 133 contributes to the substrate binding site.

It belongs to the shikimate kinase family. As to quaternary structure, monomer. Requires Mg(2+) as cofactor.

It localises to the cytoplasm. It carries out the reaction shikimate + ATP = 3-phosphoshikimate + ADP + H(+). Its pathway is metabolic intermediate biosynthesis; chorismate biosynthesis; chorismate from D-erythrose 4-phosphate and phosphoenolpyruvate: step 5/7. Its function is as follows. Catalyzes the specific phosphorylation of the 3-hydroxyl group of shikimic acid using ATP as a cosubstrate. This is Shikimate kinase from Aquifex aeolicus (strain VF5).